Reading from the N-terminus, the 123-residue chain is Large ribosomal subunit protein bL12 (123 aa).

This sequence belongs to the bacterial ribosomal protein bL12 family. Homodimer. Part of the ribosomal stalk of the 50S ribosomal subunit. Forms a multimeric L10(L12)X complex, where L10 forms an elongated spine to which 2 to 4 L12 dimers bind in a sequential fashion. Binds GTP-bound translation factors.

In terms of biological role, forms part of the ribosomal stalk which helps the ribosome interact with GTP-bound translation factors. Is thus essential for accurate translation. The polypeptide is Large ribosomal subunit protein bL12 (Burkholderia vietnamiensis (strain G4 / LMG 22486) (Burkholderia cepacia (strain R1808))).